We begin with the raw amino-acid sequence, 88 residues long: Small ribosomal subunit protein uS15 (88 aa).

It belongs to the universal ribosomal protein uS15 family. Part of the 30S ribosomal subunit. Forms a bridge to the 50S subunit in the 70S ribosome, contacting the 23S rRNA.

Its function is as follows. One of the primary rRNA binding proteins, it binds directly to 16S rRNA where it helps nucleate assembly of the platform of the 30S subunit by binding and bridging several RNA helices of the 16S rRNA. In terms of biological role, forms an intersubunit bridge (bridge B4) with the 23S rRNA of the 50S subunit in the ribosome. This Flavobacterium johnsoniae (strain ATCC 17061 / DSM 2064 / JCM 8514 / BCRC 14874 / CCUG 350202 / NBRC 14942 / NCIMB 11054 / UW101) (Cytophaga johnsonae) protein is Small ribosomal subunit protein uS15.